The primary structure comprises 331 residues: UPF0194 membrane protein YbhG (331 aa).

Residues Met-1 to Ala-19 form the signal peptide. The stretch at Glu-107–Ala-208 forms a coiled coil.

The protein belongs to the UPF0194 family.

The protein resides in the periplasm. This Salmonella agona (strain SL483) protein is UPF0194 membrane protein YbhG.